The following is a 184-amino-acid chain: MRAFIAIDVSESVRDALVRAQDYIGSKEAKIKFVERENFHITLKFLGEITEEQAEEIKKILEKIAKKYKKHEVNVRGIGVFPNPNYVRVIWAGVENDEIIKKIAKEIDDELAKLGFKKEGNFVAHITLGRVKFVKDKLGLAMKLKELANEDFGSFIVEAIELKKSTLTPKGPIYETLARFELSE.

H40 functions as the Proton donor in the catalytic mechanism. Short sequence motifs (HXTX) lie at residues 40-43 (HITL) and 125-128 (HITL). H125 functions as the Proton acceptor in the catalytic mechanism.

Belongs to the 2H phosphoesterase superfamily. ThpR family.

It catalyses the reaction a 3'-end 2',3'-cyclophospho-ribonucleotide-RNA + H2O = a 3'-end 2'-phospho-ribonucleotide-RNA + H(+). In terms of biological role, hydrolyzes RNA 2',3'-cyclic phosphodiester to an RNA 2'-phosphomonoester. In vitro, ligates 5' and 3' half-tRNA molecules with 2',3'-cyclic phosphate and 5'-hydroxyl termini, respectively, to the product containing the 2'-5' phosphodiester linkage. Ligase activity requires GTP, but GTP hydrolysis is not required for the reaction, which is reversible. Ligase activity is weak compared to the phosphodiesterase activity. The chain is RNA 2',3'-cyclic phosphodiesterase from Pyrococcus furiosus (strain ATCC 43587 / DSM 3638 / JCM 8422 / Vc1).